A 349-amino-acid polypeptide reads, in one-letter code: Phosphoribosylformylglycinamidine cyclo-ligase (349 aa).

This sequence belongs to the AIR synthase family.

Its subcellular location is the cytoplasm. It carries out the reaction 2-formamido-N(1)-(5-O-phospho-beta-D-ribosyl)acetamidine + ATP = 5-amino-1-(5-phospho-beta-D-ribosyl)imidazole + ADP + phosphate + H(+). Its pathway is purine metabolism; IMP biosynthesis via de novo pathway; 5-amino-1-(5-phospho-D-ribosyl)imidazole from N(2)-formyl-N(1)-(5-phospho-D-ribosyl)glycinamide: step 2/2. This chain is Phosphoribosylformylglycinamidine cyclo-ligase, found in Psychrobacter cryohalolentis (strain ATCC BAA-1226 / DSM 17306 / VKM B-2378 / K5).